The chain runs to 130 residues: Large ribosomal subunit protein bL19 (130 aa).

It belongs to the bacterial ribosomal protein bL19 family.

Its function is as follows. This protein is located at the 30S-50S ribosomal subunit interface and may play a role in the structure and function of the aminoacyl-tRNA binding site. In Mycoplasma mycoides subsp. mycoides SC (strain CCUG 32753 / NCTC 10114 / PG1), this protein is Large ribosomal subunit protein bL19.